A 102-amino-acid chain; its full sequence is MNKIRKGDEVIVITGKDKGKRGVVLSVGEGKVIVEGINLVKKHVKPNPMKGTTGGVEAKTMPLQISNVALVDANGKASRVGIKVEGDKKIRFLKTTGAELSA.

Belongs to the universal ribosomal protein uL24 family. Part of the 50S ribosomal subunit.

In terms of biological role, one of two assembly initiator proteins, it binds directly to the 5'-end of the 23S rRNA, where it nucleates assembly of the 50S subunit. Its function is as follows. One of the proteins that surrounds the polypeptide exit tunnel on the outside of the subunit. In Paraburkholderia xenovorans (strain LB400), this protein is Large ribosomal subunit protein uL24.